The sequence spans 466 residues: ATP-dependent protease ATPase subunit HslU (466 aa).

Residues Ile-18, 60-65 (GVGKTE), Asp-279, Glu-344, and Arg-416 each bind ATP.

This sequence belongs to the ClpX chaperone family. HslU subfamily. A double ring-shaped homohexamer of HslV is capped on each side by a ring-shaped HslU homohexamer. The assembly of the HslU/HslV complex is dependent on binding of ATP.

It is found in the cytoplasm. In terms of biological role, ATPase subunit of a proteasome-like degradation complex; this subunit has chaperone activity. The binding of ATP and its subsequent hydrolysis by HslU are essential for unfolding of protein substrates subsequently hydrolyzed by HslV. HslU recognizes the N-terminal part of its protein substrates and unfolds these before they are guided to HslV for hydrolysis. In Lactobacillus acidophilus (strain ATCC 700396 / NCK56 / N2 / NCFM), this protein is ATP-dependent protease ATPase subunit HslU.